Here is a 78-residue protein sequence, read N- to C-terminus: Pro-glucagon (78 aa).

It belongs to the glucagon family.

Its subcellular location is the secreted. Functionally, plays a key role in glucose metabolism and homeostasis. Regulates blood glucose by increasing gluconeogenesis and decreasing glycolysis. The polypeptide is Pro-glucagon (gcg) (Atractosteus spatula (Alligator gar)).